The primary structure comprises 51 residues: Toxin CSTX-18 (51 aa).

4 disulfide bridges follow: Cys-9–Cys-22, Cys-14–Cys-27, Cys-21–Cys-36, and Cys-29–Cys-34.

Post-translationally, contains 4 disulfide bonds. In terms of tissue distribution, expressed by the venom gland.

Its subcellular location is the secreted. In Cupiennius salei (American wandering spider), this protein is Toxin CSTX-18.